A 78-amino-acid polypeptide reads, in one-letter code: Acyl carrier protein (78 aa).

The Carrier domain occupies 1-76 (MALFEDIQAV…DVVKYIEDNK (76 aa)). An O-(pantetheine 4'-phosphoryl)serine modification is found at serine 36.

Belongs to the acyl carrier protein (ACP) family. Post-translationally, 4'-phosphopantetheine is transferred from CoA to a specific serine of apo-ACP by AcpS. This modification is essential for activity because fatty acids are bound in thioester linkage to the sulfhydryl of the prosthetic group.

The protein localises to the cytoplasm. The protein operates within lipid metabolism; fatty acid biosynthesis. Functionally, carrier of the growing fatty acid chain in fatty acid biosynthesis. In Helicobacter pylori (strain ATCC 700392 / 26695) (Campylobacter pylori), this protein is Acyl carrier protein.